Here is a 631-residue protein sequence, read N- to C-terminus: MLIFMYLYVCVCTCTCAFSLCSTNVVMNYSEIESKVREATNDDPWGPSGQLMGEIAKATFMYEQFPELMNMLWSRMLKDNKKNWRRVYKSLLLLAYLIRNGSERVVTSAREHIYDLRSLENYHFVDEHGKDQGINIRQKVKELVEFAQDDDRLREERKKAKKNKDKYVGVSSDSVGGFRYNERYDPEPKSKWDEEWDKNKSAFPFSDKLGELSDKIGSTIDDTISKFRRKDREDSPERCSDSDEEKKARRGRSPKGEFKDEEETVTTKHIHITQATETTTTRHKRTANPSKTIDLGAAAHYTGDKASPDQNASTHTPQSSAKPSVPSSKSSGDLVDLFDGSSQSAGGSADLFGGFADFGSAAASGNFPSQATSGNGDFGDWSAFNQAPSGPVASGGELFGSAPQSAVELISASQPALGPPPAASNSADLFDLMGSSQATMTSSQSMNFSLMSTNTVGLGLPMSRSQNTDMVQKSASKTLPSTWSDPSVNISLDNLLPGMQPSKPQQPSLNTMIQQQNMQQPLNVMTQSFGAVNLSSPSNMLPVRPQTNPLLGGPMPMNMPGVMTGTMGMAPLGNSAGMSQGMVGMNMNMGMSASGMGLSGTMGMGMPSMAMPSGTVQPKQDAFANFANFSK.

In terms of domain architecture, ENTH spans 24–157 (NVVMNYSEIE…QDDDRLREER (134 aa)). An a 1,2-diacyl-sn-glycero-3-phospho-(1D-myo-inositol-4,5-bisphosphate)-binding site is contributed by Arg37. The interval 60–62 (FMY) is interaction with VTI1B. Residue Arg75 participates in a 1,2-diacyl-sn-glycero-3-phospho-(1D-myo-inositol-4,5-bisphosphate) binding. Interaction with VTI1B regions lie at residues 102–104 (SER) and 150–161 (DDRLREERKKAK). Ser171, Ser174, Ser213, Ser218, Ser235, Ser253, and Ser307 each carry phosphoserine. A disordered region spans residues 227-339 (FRRKDREDSP…SSGDLVDLFD (113 aa)). Residues 230 to 247 (KDREDSPERCSDSDEEKK) show a composition bias toward basic and acidic residues. Residues 308–318 (PDQNASTHTPQ) are compositionally biased toward polar residues. Thr316 is modified (phosphothreonine). Residues 319-331 (SSAKPSVPSSKSS) are compositionally biased toward low complexity. A phosphoserine mark is found at Ser320 and Ser630.

This sequence belongs to the epsin family. As to quaternary structure, binds clathrin heavy chain and AP-2. Interacts with VTI1B. Interacts with GGA2 (via GAE domain). Interacts with AP1G1 (via GAE domain). Interacts with AP1G2 (via GAE domain).

The protein localises to the cytoplasm. The protein resides in the perinuclear region. It localises to the membrane. It is found in the cytoplasmic vesicle. Its subcellular location is the clathrin-coated vesicle. Functionally, binds to membranes enriched in phosphatidylinositol 4,5-bisphosphate (PtdIns(4,5)P2). May have a role in transport via clathrin-coated vesicles from the trans-Golgi network to endosomes. Stimulates clathrin assembly. This is Clathrin interactor 1 (Clint1) from Mus musculus (Mouse).